Reading from the N-terminus, the 772-residue chain is Glucocorticoid receptor (772 aa).

The span at 1–15 (MDSKESLSPPGREEV) shows a compositional bias: basic and acidic residues. The segment at 1-22 (MDSKESLSPPGREEVPSSVLRP) is disordered. Positions 1 to 415 (MDSKESLSPP…TTAAGPPPKL (415 aa)) are modulating. The residue at position 25 (Arg25) is an Omega-N-methylarginine. Positions 39–82 (APVRVPASSPSLAPAAQPDSKQQRLAVDFPKGSASNAQQPDLSR) are disordered. The span at 44-58 (PASSPSLAPAAQPDS) shows a compositional bias: low complexity. Ser47, Ser115, Ser136, and Ser143 each carry phosphoserine. Residues 132-186 (NRSASGADNPRSTAPAAGSAAPTEGFPKTHSDLASERQNPKGQTGGSAGSAKLHP) form a disordered region. The segment covering 143-156 (STAPAAGSAAPTEG) has biased composition (low complexity). Basic and acidic residues predominate over residues 158 to 170 (PKTHSDLASERQN). Phosphoserine occurs at positions 203, 211, and 226. Lys258 is covalently cross-linked (Glycyl lysine isopeptide (Lys-Gly) (interchain with G-Cter in SUMO2)). Residues Lys277 and Lys293 each participate in a glycyl lysine isopeptide (Lys-Gly) (interchain with G-Cter in SUMO); alternate cross-link. Residues Lys277 and Lys293 each participate in a glycyl lysine isopeptide (Lys-Gly) (interchain with G-Cter in SUMO2); alternate cross-link. Ser307 and Ser400 each carry phosphoserine. Lys414 participates in a covalent cross-link: Glycyl lysine isopeptide (Lys-Gly) (interchain with G-Cter in ubiquitin). 2 consecutive NR C4-type zinc fingers follow at residues 416 to 436 (CLVC…CGSC) and 452 to 476 (CAGR…YRKC). The segment at residues 416 to 481 (CLVCSDEASG…RYRKCLQAGM (66 aa)) is a DNA-binding region (nuclear receptor). An N6-acetyllysine mark is found at Lys475, Lys487, Lys489, and Lys490. Residues 480 to 772 (GMNLEARKTK…NIKKLLFHQK (293 aa)) form an interaction with CLOCK region. The segment at 482 to 518 (NLEARKTKKKIKGIQQTSTGVSQETSENPSNRTVVPA) is hinge. Residues 494 to 513 (GIQQTSTGVSQETSENPSNR) form a disordered region. Over residues 499-513 (STGVSQETSENPSNR) the composition is skewed to polar residues. The region spanning 519 to 753 (ALPQLTPTLV…FPEMLAEIIT (235 aa)) is the NR LBD domain. The tract at residues 527 to 692 (LVSLLEVIEP…EIRMTYIKEL (166 aa)) is interaction with CRY1. Lys698 is covalently cross-linked (Glycyl lysine isopeptide (Lys-Gly) (interchain with G-Cter in SUMO)).

This sequence belongs to the nuclear hormone receptor family. NR3 subfamily. As to quaternary structure, heteromultimeric cytoplasmic complex with HSP90AA1, HSPA1A/HSPA1B, and FKBP5 or another immunophilin such as PPID, STIP1, or the immunophilin homolog PPP5C. Upon ligand binding FKBP5 dissociates from the complex and FKBP4 takes its place, thereby linking the complex to dynein and mediating transport to the nucleus, where the complex dissociates. Probably forms a complex composed of chaperones HSP90 and HSP70, co-chaperones CDC37, PPP5C, TSC1 and client protein TSC2, CDK4, AKT, RAF1 and NR3C1; this complex does not contain co-chaperones STIP1/HOP and PTGES3/p23. Directly interacts with UNC45A. Binds to DNA as a homodimer, and as heterodimer with NR3C2 or the retinoid X receptor. Binds STAT5A and STAT5B homodimers and heterodimers. Interacts with NRIP1, POU2F1, POU2F2 and TRIM28. Interacts with several coactivator complexes, including the SMARCA4 complex, CREBBP/EP300, TADA2L (Ada complex) and p160 coactivators such as NCOA2 and NCOA6. Interaction with BAG1 inhibits transactivation. Interacts with HEXIM1 and TGFB1I1. Interacts with NCOA1. Interacts with NCOA3, SMARCA4, SMARCC1, SMARCD1, and SMARCE1. Interacts with CLOCK, CRY1 and CRY2 in a ligand-dependent fashion. Interacts with CIART. Interacts with RWDD3. Interacts with UBE2I/UBC9 and this interaction is enhanced in the presence of RWDD3. Interacts with GRIP1. Interacts with NR4A3 (via nuclear receptor DNA-binding domain), represses transcription activity of NR4A3 on the POMC promoter Nur response element (NurRE). Directly interacts with PNRC2 to attract and form a complex with UPF1 and DCP1A; the interaction leads to rapid mRNA degradation. Interacts with GSK3B. Interacts with FNIP1 and FNIP2. Interacts (via C-terminus) with HNRNPU (via C-terminus). Interacts with MCM3AP. Interacts (via domain NR LBD) with HSP90AA1 and HSP90AB1. In the absence of hormonal ligand, interacts with TACC1. Interacts (via NR LBD domain) with ZNF764 (via KRAB domain); the interaction regulates transcription factor activity of NR3C1 by directing its actions toward certain biologic pathways. Post-translationally, acetylation by CLOCK reduces its binding to glucocorticoid response elements and its transcriptional activity. In terms of processing, increased proteasome-mediated degradation in response to glucocorticoids. Phosphorylated in the absence of hormone; becomes hyperphosphorylated in the presence of glucocorticoid. The Ser-203, Ser-226 and Ser-399-phosphorylated forms are mainly cytoplasmic, and the Ser-211-phosphorylated form is nuclear. Phosphorylation at Ser-211 increases transcriptional activity. Phosphorylation at Ser-203, Ser-226 and Ser-399 decreases signaling capacity. Phosphorylation at Ser-399 may protect from glucocorticoid-induced apoptosis. Phosphorylation at Ser-203 and Ser-211 is not required in regulation of chromosome segregation. May be dephosphorylated by PPP5C, attenuates NR3C1 action. Post-translationally, ubiquitinated by UBR5, leading to its degradation: UBR5 specifically recognizes and binds ligand-bound NR3C1 when it is not associated with coactivators (NCOAs). In presence of NCOAs, the UBR5-degron is not accessible, preventing its ubiquitination and degradation. In terms of processing, sumoylation at Lys-277 and Lys-293 negatively regulates its transcriptional activity. Sumoylation at Lys-698 positively regulates its transcriptional activity in the presence of RWDD3. Sumoylation at Lys-277 and Lys-293 is dispensable whereas sumoylation at Lys-698 is critical for the stimulatory effect of RWDD3 on its transcriptional activity. Heat shock increases sumoylation in a RWDD3-dependent manner.

The protein localises to the cytoplasm. It localises to the nucleus. It is found in the mitochondrion. Its subcellular location is the cytoskeleton. The protein resides in the spindle. The protein localises to the microtubule organizing center. It localises to the centrosome. It is found in the chromosome. Its subcellular location is the nucleoplasm. Functionally, receptor for glucocorticoids (GC). Has a dual mode of action: as a transcription factor that binds to glucocorticoid response elements (GRE), both for nuclear and mitochondrial DNA, and as a modulator of other transcription factors. Affects inflammatory responses, cellular proliferation and differentiation in target tissues. Involved in chromatin remodeling. Plays a role in rapid mRNA degradation by binding to the 5' UTR of target mRNAs and interacting with PNRC2 in a ligand-dependent manner which recruits the RNA helicase UPF1 and the mRNA-decapping enzyme DCP1A, leading to RNA decay. Could act as a coactivator for STAT5-dependent transcription upon growth hormone (GH) stimulation and could reveal an essential role of hepatic GR in the control of body growth. Mediates glucocorticoid-induced apoptosis. Promotes accurate chromosome segregation during mitosis. May act as a tumor suppressor. May play a negative role in adipogenesis through the regulation of lipolytic and antilipogenic gene expression. This is Glucocorticoid receptor (NR3C1) from Oryctolagus cuniculus (Rabbit).